The chain runs to 163 residues: Nucleotide-binding protein Cj0374 (163 aa).

It belongs to the YajQ family.

Nucleotide-binding protein. This Campylobacter jejuni subsp. jejuni serotype O:2 (strain ATCC 700819 / NCTC 11168) protein is Nucleotide-binding protein Cj0374.